A 79-amino-acid chain; its full sequence is Quinohemoprotein amine dehydrogenase subunit gamma (79 aa).

Positions 7–16 (CTATTDPGWE) form a cross-link, 4-cysteinyl-glutamic acid (Cys-Glu). 2 cross-links (3-cysteinyl-aspartic acid (Cys-Asp)) span residues 27-33 (CQPMEAD) and 41-49 (CWWPAQVPD). Asp-33 serves as the catalytic Proton acceptor. The segment at residues 37–43 (CSDPCWW) is a cross-link (4'-cysteinyl-tryptophylquinone (Cys-Trp)). Tryptophylquinone is present on Trp-43.

Belongs to the quinohemoprotein amine dehydrogenase subunit gamma family. In terms of assembly, heterotrimer of an alpha, a beta and a gamma subunit. Cysteine tryptophylquinone residue serves as cofactor. Post-translationally, the cysteine tryptophylquinone (CTQ) is generated by oxidation of the indole ring of a tryptophan residue to form tryptophylquinone, followed by covalent cross-linking with a cysteine residue.

Its subcellular location is the periplasm. It carries out the reaction an aliphatic amine + A + H2O = an aldehyde + AH2 + NH4(+). Catalyzes the oxidative deamination of a wide range of aliphatic monoamines and diamines. The physiological electron acceptor is an azurin-like blue protein. The protein is Quinohemoprotein amine dehydrogenase subunit gamma (qhnDH) of Pseudomonas putida (strain ATCC 47054 / DSM 6125 / CFBP 8728 / NCIMB 11950 / KT2440).